The primary structure comprises 485 residues: Aspartyl/glutamyl-tRNA(Asn/Gln) amidotransferase subunit B (485 aa).

This sequence belongs to the GatB/GatE family. GatB subfamily. As to quaternary structure, heterotrimer of A, B and C subunits.

It carries out the reaction L-glutamyl-tRNA(Gln) + L-glutamine + ATP + H2O = L-glutaminyl-tRNA(Gln) + L-glutamate + ADP + phosphate + H(+). The enzyme catalyses L-aspartyl-tRNA(Asn) + L-glutamine + ATP + H2O = L-asparaginyl-tRNA(Asn) + L-glutamate + ADP + phosphate + 2 H(+). Allows the formation of correctly charged Asn-tRNA(Asn) or Gln-tRNA(Gln) through the transamidation of misacylated Asp-tRNA(Asn) or Glu-tRNA(Gln) in organisms which lack either or both of asparaginyl-tRNA or glutaminyl-tRNA synthetases. The reaction takes place in the presence of glutamine and ATP through an activated phospho-Asp-tRNA(Asn) or phospho-Glu-tRNA(Gln). This is Aspartyl/glutamyl-tRNA(Asn/Gln) amidotransferase subunit B from Rhodospirillum rubrum (strain ATCC 11170 / ATH 1.1.1 / DSM 467 / LMG 4362 / NCIMB 8255 / S1).